We begin with the raw amino-acid sequence, 82 residues long: Cytochrome b559 subunit alpha (82 aa).

The chain crosses the membrane as a helical span at residues 21–35 (VIHSITIPSLFIAGW). Heme is bound at residue His23.

Belongs to the PsbE/PsbF family. Heterodimer of an alpha subunit and a beta subunit. PSII is composed of 1 copy each of membrane proteins PsbA, PsbB, PsbC, PsbD, PsbE, PsbF, PsbH, PsbI, PsbJ, PsbK, PsbL, PsbM, PsbT, PsbX, PsbY, PsbZ, Psb30/Ycf12, at least 3 peripheral proteins of the oxygen-evolving complex and a large number of cofactors. It forms dimeric complexes. The cofactor is heme b.

The protein localises to the plastid. Its subcellular location is the chloroplast thylakoid membrane. In terms of biological role, this b-type cytochrome is tightly associated with the reaction center of photosystem II (PSII). PSII is a light-driven water:plastoquinone oxidoreductase that uses light energy to abstract electrons from H(2)O, generating O(2) and a proton gradient subsequently used for ATP formation. It consists of a core antenna complex that captures photons, and an electron transfer chain that converts photonic excitation into a charge separation. The chain is Cytochrome b559 subunit alpha from Stigeoclonium helveticum (Green alga).